The following is a 319-amino-acid chain: Acetyl-coenzyme A carboxylase carboxyl transferase subunit alpha (319 aa).

The CoA carboxyltransferase C-terminal domain maps to asparagine 35–aspartate 296.

The protein belongs to the AccA family. In terms of assembly, acetyl-CoA carboxylase is a heterohexamer composed of biotin carboxyl carrier protein (AccB), biotin carboxylase (AccC) and two subunits each of ACCase subunit alpha (AccA) and ACCase subunit beta (AccD).

The protein resides in the cytoplasm. The enzyme catalyses N(6)-carboxybiotinyl-L-lysyl-[protein] + acetyl-CoA = N(6)-biotinyl-L-lysyl-[protein] + malonyl-CoA. Its pathway is lipid metabolism; malonyl-CoA biosynthesis; malonyl-CoA from acetyl-CoA: step 1/1. In terms of biological role, component of the acetyl coenzyme A carboxylase (ACC) complex. First, biotin carboxylase catalyzes the carboxylation of biotin on its carrier protein (BCCP) and then the CO(2) group is transferred by the carboxyltransferase to acetyl-CoA to form malonyl-CoA. This chain is Acetyl-coenzyme A carboxylase carboxyl transferase subunit alpha, found in Salmonella agona (strain SL483).